The primary structure comprises 175 residues: SsrA-binding protein (175 aa).

Disordered regions lie at residues 1-29 (MTRN…ERDA) and 152-175 (KRET…SRKS).

Belongs to the SmpB family.

It localises to the cytoplasm. Required for rescue of stalled ribosomes mediated by trans-translation. Binds to transfer-messenger RNA (tmRNA), required for stable association of tmRNA with ribosomes. tmRNA and SmpB together mimic tRNA shape, replacing the anticodon stem-loop with SmpB. tmRNA is encoded by the ssrA gene; the 2 termini fold to resemble tRNA(Ala) and it encodes a 'tag peptide', a short internal open reading frame. During trans-translation Ala-aminoacylated tmRNA acts like a tRNA, entering the A-site of stalled ribosomes, displacing the stalled mRNA. The ribosome then switches to translate the ORF on the tmRNA; the nascent peptide is terminated with the 'tag peptide' encoded by the tmRNA and targeted for degradation. The ribosome is freed to recommence translation, which seems to be the essential function of trans-translation. This Koribacter versatilis (strain Ellin345) protein is SsrA-binding protein.